The chain runs to 162 residues: uncharacterized protein (162 aa).

This sequence belongs to the A.longa ORF167/ORF288 family.

The protein resides in the plastid. This is an uncharacterized protein from Euglena longa (Euglenophycean alga).